The following is a 386-amino-acid chain: Putative aminotransferase YugH (386 aa).

K234 is modified (N6-(pyridoxal phosphate)lysine).

This sequence belongs to the class-I pyridoxal-phosphate-dependent aminotransferase family. Pyridoxal 5'-phosphate is required as a cofactor.

It localises to the cytoplasm. This chain is Putative aminotransferase YugH (yugH), found in Bacillus subtilis (strain 168).